Reading from the N-terminus, the 407-residue chain is Phosphopentomutase (407 aa).

The Mn(2+) site is built by Asp-10, Asp-306, His-311, Asp-347, His-348, and His-359.

Belongs to the phosphopentomutase family. Mn(2+) serves as cofactor.

Its subcellular location is the cytoplasm. The catalysed reaction is 2-deoxy-alpha-D-ribose 1-phosphate = 2-deoxy-D-ribose 5-phosphate. The enzyme catalyses alpha-D-ribose 1-phosphate = D-ribose 5-phosphate. The protein operates within carbohydrate degradation; 2-deoxy-D-ribose 1-phosphate degradation; D-glyceraldehyde 3-phosphate and acetaldehyde from 2-deoxy-alpha-D-ribose 1-phosphate: step 1/2. In terms of biological role, isomerase that catalyzes the conversion of deoxy-ribose 1-phosphate (dRib-1-P) and ribose 1-phosphate (Rib-1-P) to deoxy-ribose 5-phosphate (dRib-5-P) and ribose 5-phosphate (Rib-5-P), respectively. The chain is Phosphopentomutase from Salmonella dublin (strain CT_02021853).